Consider the following 262-residue polypeptide: 3-methyl-2-oxobutanoate hydroxymethyltransferase (262 aa).

Mg(2+) is bound by residues aspartate 44 and aspartate 83. Residues 44 to 45 (DS), aspartate 83, and lysine 112 each bind 3-methyl-2-oxobutanoate. Mg(2+) is bound at residue glutamate 114. The active-site Proton acceptor is glutamate 180.

This sequence belongs to the PanB family. As to quaternary structure, homodecamer; pentamer of dimers. Mg(2+) serves as cofactor.

The protein localises to the cytoplasm. It carries out the reaction 3-methyl-2-oxobutanoate + (6R)-5,10-methylene-5,6,7,8-tetrahydrofolate + H2O = 2-dehydropantoate + (6S)-5,6,7,8-tetrahydrofolate. It participates in cofactor biosynthesis; (R)-pantothenate biosynthesis; (R)-pantoate from 3-methyl-2-oxobutanoate: step 1/2. Its function is as follows. Catalyzes the reversible reaction in which hydroxymethyl group from 5,10-methylenetetrahydrofolate is transferred onto alpha-ketoisovalerate to form ketopantoate. In Chromobacterium violaceum (strain ATCC 12472 / DSM 30191 / JCM 1249 / CCUG 213 / NBRC 12614 / NCIMB 9131 / NCTC 9757 / MK), this protein is 3-methyl-2-oxobutanoate hydroxymethyltransferase.